Here is a 105-residue protein sequence, read N- to C-terminus: Thioredoxin (105 aa).

Residues 1–105 enclose the Thioredoxin domain; that stretch reads MANNVTDSSF…SLLDWINKSI (105 aa). The cysteines at positions 30 and 33 are disulfide-linked.

The protein belongs to the thioredoxin family.

Its function is as follows. Component of the thioredoxin-thioredoxin reductase system. Participates in various redox reactions through the reversible oxidation of its active center dithiol to a disulfide and catalyzes dithiol-disulfide exchange reactions. The polypeptide is Thioredoxin (trxA) (Rickettsia felis (strain ATCC VR-1525 / URRWXCal2) (Rickettsia azadi)).